The primary structure comprises 323 residues: uncharacterized protein (323 aa).

The S4 RNA-binding domain occupies 16 to 95; the sequence is QRIDQFCLKI…DKLKIIFEDE (80 aa). Asp-148 is an active-site residue.

It belongs to the pseudouridine synthase RluA family.

The catalysed reaction is a uridine in RNA = a pseudouridine in RNA. This is an uncharacterized protein from Mycoplasma genitalium (strain ATCC 33530 / DSM 19775 / NCTC 10195 / G37) (Mycoplasmoides genitalium).